Here is a 453-residue protein sequence, read N- to C-terminus: Midnolin-A (453 aa).

The Ubiquitin-like domain maps to 20-94 (MNLNIQSTTG…LTLLPSVEAG (75 aa)). Disordered stretches follow at residues 184–219 (SHLA…TTSV), 232–256 (CAEQ…RSRK), 333–376 (RNAK…ENRA), and 390–429 (QKRL…EGSL). A compositionally biased stretch (polar residues) spans 206–219 (HCNGPHSSPLTTSV). Low complexity-rich tracts occupy residues 239–252 (STRG…SPSS) and 338–351 (TSPQ…TTHP). Positions 365–376 (SGDRLRQTENRA) are enriched in basic and acidic residues. The segment covering 390 to 399 (QKRLRRKARR) has biased composition (basic residues). A compositionally biased stretch (low complexity) spans 415 to 428 (RTSSNSSTSSGEGS).

Its subcellular location is the nucleus. The protein resides in the cytoplasm. The protein localises to the cytosol. It is found in the nucleolus. Functionally, facilitates ubiquitin-independent proteasomal degradation of polycomb protein CBX4. Plays a role in inhibiting the activity of glucokinase GCK and both glucose-induced and basal insulin secretion. The polypeptide is Midnolin-A (midn-a) (Xenopus laevis (African clawed frog)).